A 262-amino-acid chain; its full sequence is MKTPFGKTPGQRSRADAGHAGVSANMMKKRTSHKKHRTSVGPSKPVSQPRRNIVGCRIQHGWREGNGPVTQWKGTVLDQVPVNPSLYLIKYDGFDCVYGLELNKDDRVSALEVLPDRVATSRISDAHLADTMIGKAVEHMFETEDGSKDEWRGMVLARAPVMNTWFYITYEKDPVLYMYQLLDDYKEGDLRIMPDSNDSPPAEREPGEVVDSLVGKQVEYAKEDGSKRTGMVIHQVEAKPSVYFIKFDDDFHIYVYDLVKTS.

Residues 1–49 (MKTPFGKTPGQRSRADAGHAGVSANMMKKRTSHKKHRTSVGPSKPVSQP) form a disordered region. Glycyl lysine isopeptide (Lys-Gly) (interchain with G-Cter in SUMO2) cross-links involve residues lysine 7 and lysine 28. Positions 27–38 (MKKRTSHKKHRT) are enriched in basic residues. An N6-acetyllysine; alternate modification is found at lysine 44. Lysine 44 is covalently cross-linked (Glycyl lysine isopeptide (Lys-Gly) (interchain with G-Cter in SUMO2); alternate). The segment at 53–116 (IVGCRIQHGW…RVSALEVLPD (64 aa)) is tudor-like domain 1. The histone H3K4me3 and H3R8me2a binding stretch occupies residues 93-98 (GFDCVY). A phosphoserine; by AURKA mark is found at serine 109 and serine 124. Residues 132–193 (MIGKAVEHMF…DYKEGDLRIM (62 aa)) form a tudor-like domain 2 region. Position 142 (glutamate 142) is a region of interest, histone H3K4me3 and H3R8me2a binding. The residue at position 199 (serine 199) is a Phosphoserine. A tudor-like domain 3 region spans residues 213–262 (LVGKQVEYAKEDGSKRTGMVIHQVEAKPSVYFIKFDDDFHIYVYDLVKTS). The histone H3K4me3 and H3R8me2a binding stretch occupies residues 250–252 (DFH).

This sequence belongs to the SPIN/STSY family. Homodimer; may form higher-order oligomers. Interacts with TCF7L2/TCF4; the interaction is direct. Interacts with HABP4 and SERBP1. Interacts with SPINDOC; SPINDOC stabilizes SPIN1 and enhances its association with bivalent H3K4me3K9me3 mark. Interacts with SPOCD1; promoting recruitment of PIWIL4 and SPOCD1 to transposons. In terms of processing, phosphorylated during oocyte meiotic maturation.

The protein localises to the nucleus. The protein resides in the nucleolus. In terms of biological role, chromatin reader that specifically recognizes and binds histone H3 both trimethylated at 'Lys-4' and 'Lys-9' (H3K4me3K9me3) and is involved in piRNA-mediated retrotransposon silencing during spermatogenesis. Plays a key role in the initiation of the PIWIL4-piRNA pathway, a pathway that directs transposon DNA methylation and silencing in the male embryonic germ cells, by promoting recruitment of DNA methylation machinery to transposons: binds young, but not old, LINE1 transposons, which are specifically marked with H3K4me3K9me3, and promotes the recruitment of PIWIL4 and SPOCD1 to transposons, leading to piRNA-directed DNA methylation. Also recognizes and binds histone H3 both trimethylated at 'Lys-4' and asymmetrically dimethylated at 'Arg-8' (H3K4me3 and H3R8me2a) and acts as an activator of Wnt signaling pathway downstream of PRMT2. Overexpression induces metaphase arrest and chromosomal instability. Overexpression induces metaphase arrest and chromosomal instability. Localizes to active rDNA loci and promotes the expression of rRNA genes. May play a role in cell-cycle regulation during the transition from gamete to embryo. Involved in oocyte meiotic resumption, a process that takes place before ovulation to resume meiosis of oocytes blocked in prophase I: may act by regulating maternal transcripts to control meiotic resumption. This is Spindlin-1 (Spin1) from Rattus norvegicus (Rat).